A 127-amino-acid polypeptide reads, in one-letter code: Fumarate reductase subunit C (127 aa).

The next 3 membrane-spanning stretches (helical) occupy residues 30-50 (ATVLPLILFTIFLTFGLGSLV), 67-87 (IVVAINIVALLGSLFHAQTFF), and 107-127 (IIVLTQWAAVAFISLIVLIVM).

The protein belongs to the FrdC family. In terms of assembly, part of an enzyme complex containing four subunits: a flavoprotein (FrdA), an iron-sulfur protein (FrdB), and two hydrophobic anchor proteins (FrdC and FrdD).

Its subcellular location is the cell inner membrane. Functionally, anchors the catalytic components of the fumarate reductase complex to the cell membrane, binds quinones. In Vibrio campbellii (strain ATCC BAA-1116), this protein is Fumarate reductase subunit C.